The sequence spans 361 residues: NudC domain-containing protein 3 (361 aa).

A compositionally biased stretch (basic and acidic residues) spans K87 to K97. A disordered region spans residues K87–K106. S146 is subject to Phosphoserine. The CS domain occupies A185–L277. Phosphoserine is present on residues S340 and S355.

This chain is NudC domain-containing protein 3 (NUDCD3), found in Pongo abelii (Sumatran orangutan).